The sequence spans 917 residues: Serine/arginine repetitive matrix protein 1 (917 aa).

Met1 carries the post-translational modification N-acetylmethionine. The necessary for DNA and RNA-binding stretch occupies residues 1-151 (MDAGFFRGTS…ASMKKQDEDK (151 aa)). Positions 1–156 (MDAGFFRGTS…QDEDKDKRDK (156 aa)) are necessary for mRNA 3'-end cleavage and cytoplasmic accumulation. Arg7 is modified (citrulline). The region spanning 27–126 (QLKFAECLEK…AGIPSAFLEL (100 aa)) is the PWI domain. Lys127 participates in a covalent cross-link: Glycyl lysine isopeptide (Lys-Gly) (interchain with G-Cter in SUMO2). The span at 139-170 (EKLASMKKQDEDKDKRDKEEKESSREKRERSR) shows a compositional bias: basic and acidic residues. A disordered region spans residues 139-917 (EKLASMKKQD…MRKAQVSPQS (779 aa)). Lys140 carries the N6-acetyllysine modification. Basic residues predominate over residues 171–207 (SPRRRKSRSPSPRRRSSPVRRERKRSHSRSPRHRTKS). The span at 214 to 234 (PEKKEKTPELPEPSVKVKEPS) shows a compositional bias: basic and acidic residues. Thr220 carries the phosphothreonine modification. Ser227 carries the post-translational modification Phosphoserine. Residue Lys231 forms a Glycyl lysine isopeptide (Lys-Gly) (interchain with G-Cter in SUMO1); alternate linkage. Lys231 participates in a covalent cross-link: Glycyl lysine isopeptide (Lys-Gly) (interchain with G-Cter in SUMO2); alternate. Residues Ser234 and Ser240 each carry the phosphoserine modification. Thr241 carries the post-translational modification Phosphothreonine. The segment covering 246–275 (KVPKPEPIPEPKEPSPEKNSKKEKEKEKTR) has biased composition (basic and acidic residues). Lys249 is covalently cross-linked (Glycyl lysine isopeptide (Lys-Gly) (interchain with G-Cter in SUMO2)). Ser260 is modified (phosphoserine). Basic residues-rich tracts occupy residues 276–329 (PRSR…RTPP) and 336–351 (PRHR…RRRS). Residues 300-702 (RRHRSRSRSY…NKRHSPSPRP (403 aa)) form a necessary for speckles and matrix localization region. The span at 352–368 (SASLSGSSSSSSSSRSR) shows a compositional bias: low complexity. Ser389, Ser391, Ser393, and Ser402 each carry phosphoserine. Position 406 is a phosphothreonine (Thr406). Phosphoserine is present on Ser414. Thr416 carries the phosphothreonine modification. 4 positions are modified to phosphoserine: Ser420, Ser429, Ser431, and Ser436. The segment covering 428 to 438 (VSVSPGRTSGK) has biased composition (polar residues). Residue Lys447 forms a Glycyl lysine isopeptide (Lys-Gly) (interchain with G-Cter in SUMO2) linkage. A phosphoserine mark is found at Ser450 and Ser452. Lys459 is covalently cross-linked (Glycyl lysine isopeptide (Lys-Gly) (interchain with G-Cter in SUMO2)). A phosphoserine mark is found at Ser463 and Ser465. A Glycyl lysine isopeptide (Lys-Gly) (interchain with G-Cter in SUMO2) cross-link involves residue Lys472. At Ser478 the chain carries Phosphoserine. Low complexity predominate over residues 478-501 (SVQQRRQYRRQNQQSSSDSGSSSS). Residues 503–518 (EDERPKRSHVKNGEVG) show a composition bias toward basic and acidic residues. Residues Ser524, Ser526, Ser528, Ser530, Ser532, Ser563, and Ser565 each carry the phosphoserine modification. Residues 557 to 574 (SGRRRRSPSPPPTRRRRS) show a composition bias toward basic residues. Thr569 carries the phosphothreonine modification. Phosphoserine is present on residues Ser574 and Ser576. The segment covering 581-606 (PRRRRTPTPPPRRRTPSPPPRRRSPS) has biased composition (basic residues). A phosphothreonine mark is found at Thr586, Thr588, and Thr595. At Ser597 the chain carries Phosphoserine. Positions 607 to 619 (PRRYSPPIQRRYS) are enriched in low complexity. Tyr610 bears the Phosphotyrosine mark. Ser611, Ser619, and Ser621 each carry phosphoserine. At Thr628 the chain carries Phosphothreonine. Residues Ser630, Ser640, Ser642, Ser650, and Ser652 each carry the phosphoserine modification. A compositionally biased stretch (basic residues) spans 635-650 (PKRRASPSPPPKRRVS). The segment covering 663-677 (TKRRSPSLSSKHRKG) has biased composition (basic residues). Residues 699–713 (SPRPRAPQTSSPPPV) show a composition bias toward pro residues. Ser708, Ser709, Ser718, Ser720, Ser726, and Ser728 each carry phosphoserine. Composition is skewed to low complexity over residues 714–732 (RRGA…PSTR), 749–772 (AASP…SPEP), and 782–799 (SPVQ…AVPV). Phosphothreonine is present on Thr731. A phosphoserine mark is found at Ser751, Ser753, Ser761, Ser765, Ser767, Ser769, Ser782, Ser786, Ser788, and Ser790. Position 791 is a phosphothreonine (Thr791). 2 positions are modified to phosphoserine: Ser794 and Ser804. Phosphothreonine is present on Thr806. Phosphoserine occurs at positions 808, 810, and 815. Positions 822–847 (KKKKKKKDKKHKKDKKHKKHKKHKKE) are enriched in basic residues. A compositionally biased stretch (low complexity) spans 850–879 (VAAAAAAAVTPAAIAAATTTLAQEEPVAAP). Residue Lys882 forms a Glycyl lysine isopeptide (Lys-Gly) (interchain with G-Cter in SUMO2) linkage. Phosphothreonine is present on Thr885. At Ser887 the chain carries Phosphoserine. The span at 895 to 905 (DLEKHLREKAL) shows a compositional bias: basic and acidic residues. Phosphoserine is present on Ser914.

It belongs to the splicing factor SR family. In terms of assembly, identified in the spliceosome C complex. Found in a pre-mRNA splicing complex with SFRS4, SFRS5, SNRP70, SNRPA1, SRRM1 and SRRM2. Component of the minor spliceosome, which splices U12-type introns. Found in a pre-mRNA exonic splicing enhancer (ESE) complex with SNRP70, SNRPA1, SRRM1 and TRA2B/SFRS10. Found in a mRNA splicing-dependent exon junction complex (EJC) with DEK, PRPF8, NCBP1, RBM8A, RNPS1, SRRM1 and ALYREF/THOC4. Interacts with DDX39B, CPSF1, RBM8A, RNPS1, and ALYREF/THOC4. Seems to be a compound of RNA export complexes that are released from speckles in a ATP-dependent manner. Post-translationally, phosphorylated on multiple serine and threonine residues by DYRK3 during the G2-to-M transition, after the nuclear-envelope breakdown. Phosphorylation by DYRK3 promotes disassembly of nuclear speckles. Citrullinated by PADI4.

In terms of biological role, part of pre- and post-splicing multiprotein mRNP complexes. As a component of the minor spliceosome, involved in the splicing of U12-type introns in pre-mRNAs. Involved in numerous pre-mRNA processing events. Promotes constitutive and exonic splicing enhancer (ESE)-dependent splicing activation by bridging together sequence-specific (SR family proteins, SFRS4, SFRS5 and TRA2B/SFRS10) and basal snRNP (SNRP70 and SNRPA1) factors of the spliceosome. Stimulates mRNA 3'-end cleavage independently of the formation of an exon junction complex. Binds both pre-mRNA and spliced mRNA 20-25 nt upstream of exon-exon junctions. Binds RNA and DNA with low sequence specificity and has similar preference for either double- or single-stranded nucleic acid substrates. This Pongo abelii (Sumatran orangutan) protein is Serine/arginine repetitive matrix protein 1 (SRRM1).